The following is an 84-amino-acid chain: Small ribosomal subunit protein bS20 (84 aa).

Positions 1-25 are disordered; it reads MANIVSNEKTYRHTQKVRKENHAKM.

The protein belongs to the bacterial ribosomal protein bS20 family.

Its function is as follows. Binds directly to 16S ribosomal RNA. The sequence is that of Small ribosomal subunit protein bS20 from Ureaplasma parvum serovar 3 (strain ATCC 700970).